Consider the following 1133-residue polypeptide: MAYPELDAADFLQQLARRKEFKSLISPPVDQKELIRDLRAHFVQIGGPGCEKGGRAFFPCDPYASPFPSIKGLQLHNAQLFVQNFQNPNTPYSRLLLNWQTGTGKSIAAIAIARQFMNHYMNFIENAPWIFVVGFTRAIIQTEMLRRPELGFVSYKEVAELHRLLHIAKQSGSTTSVESRHLNGFVSTLKRRLTDRNRGGFFQFYGYKEFASKLFNITSKGEEKNFDVLSLFHRSDEAEDTLNENDISQFVQKISEAETNGLIRVNQKIMEQLRGGLLIADEIHNVYNIQERNNYGIALQYVLDAFPPHQAPRAVFMSATPVTGSVMEYVDLLNLLVPRHELPNGQPLQRQQLFDSSGHSVKWKKDALALVERLSTGRVSFLLDTNTNFYPERIFAGKMLSYKDEKLPYLHFIECPMSEYQLETLKQLGPDPKISSNAYSIYDMVFPNPKFSKQTEPKAYGLFNSTETPTALSMASTDWLLENGVQIIEPSRRAPFNVSGSFLSLQPPMHISGLAFYSGKYTQMMKDILSIIRQGRGKILIYHNRVRMSGVLILQEILQSNGILNEVSSPVGTTRCSICAAIRDDHTHSDHQFIPVRFTILHSEIEPAVRERSLALFNASSNLEGHQLRILIGSKVIVEGLNFQAVRYEMIMSLPLDIPRLIQVFGRVVRKNSHMELPPSERNVTIYLYVSTTPDGGPELAKYAQKLKEYILIQEGDKALRKHAIDGFTNQIKIDKPMLESLPLSPSITPANVGATVLNTFEAYGYGEQEVKTISNIIISLFMARPVWTYSELWKAVSTPKLIQGITIDNKLFSEDNFALALISLCYSKNQCKELWIQNRLCTIMHVPAKPEHLYVAAVLNHKKEPVLDIETYIRDFQPPMMHSIRITKYLEHSQTKEPFQVLYEKFQKDFQDEPMEQVLIHYPASFHYTMLEALIIDNLAGMGALVEVYKKFFIAFSKKDIQPFPDIFKIISHVPGDDNTLVGYATEDSVRLITSREDKTWHEIPLYMLNINVKRKENDIVIGYMESKGKALKFKIRPPIQVLKKNEITDIRMLNRGAVCETRGREEQQKIANQLGISLNLTKISAIKLCLLIRNNLLQKEMEARNQPNGMQDGIRWFYLFNDKMPSLVHTS.

The Helicase ATP-binding domain maps to 52–352; it reads KGGRAFFPCD…PNGQPLQRQQ (301 aa). 99-106 lines the ATP pocket; it reads WQTGTGKS. The DEAH box motif lies at 281–284; it reads DEIH. One can recognise a Helicase C-terminal domain in the interval 524 to 724; it reads MMKDILSIIR…EGDKALRKHA (201 aa).

Belongs to the DEAD box helicase family. DEAH subfamily.

The protein localises to the virion. It catalyses the reaction ATP + H2O = ADP + phosphate + H(+). Its function is as follows. Putative initation factor. The polypeptide is Early transcription factor large subunit homolog (Ornithodoros (relapsing fever ticks)).